The following is a 69-amino-acid chain: Antimicrobial peptide Meucin-18 (69 aa).

The first 16 residues, 1 to 16, serve as a signal peptide directing secretion; sequence MVIFLAYFLVVNESEA. Positions 38-69 are excised as a propeptide; that stretch reads ERSVMNRDLENLFDPYQRNLEMDRLLKQLRNY.

It belongs to the non-disulfide-bridged peptide (NDBP) superfamily. Medium-length antimicrobial peptide (group 3) family. In terms of tissue distribution, expressed by the venom gland.

The protein localises to the secreted. It localises to the target cell membrane. Functionally, amphipathic peptide that exhibits extensive cytolytic activities against both prokaryotic and eukaryotic cells. Acts by fastly disrupting the bacterial membrane. Is more potent against Gram-positive bacteria than against Gram-negative bacteria, and fungi (LC=25.1-8.3 uM). Shows potent activity against penicillin (MIC=3.0 uM) and methicillin (MIC=1.5-3.0 uM) resistant bacteria. Is lethal to the fungus Beauveria sp (LC=1.9 uM), a highly lethal pathogenic fungus to insects and resistant to many AMPs. Shows hemolytic activity against rabbit erythrocytes (37.7% of inhibition at 6.25 uM) and cytolysis against rat dorsal root ganglions. May act by disrupting the integrity of the bacterial cell membrane. Antibiotic activity is not affected by major negatively charged components of the prokaryotic cell wall (e.g. lipopolysaccharides and lipoteichoic acid). In vivo, intravenous injection into mice tail provokes uncomfortable symptoms with a death rate of 12.5%. In vivo, in a mouse model of lethal peritonitis, shows potent antibiotic activity without cytotoxicity, improving the survival rate. This is Antimicrobial peptide Meucin-18 from Mesobuthus eupeus (Lesser Asian scorpion).